The following is a 58-amino-acid chain: UPF0434 protein Daro_3207 (58 aa).

This sequence belongs to the UPF0434 family.

The sequence is that of UPF0434 protein Daro_3207 from Dechloromonas aromatica (strain RCB).